The chain runs to 322 residues: Cytochrome c biogenesis protein CcsA (322 aa).

Helical transmembrane passes span 9–29 (ILTHISFSVVSIVITIHLITL), 44–64 (GMITTFFCITGLLVTRWIFLG), 71–91 (LYESLIFLSWSFSIIHMVPYF), 97–117 (FLSAITAPSTFFTQGFATSGL), 143–163 (MILGYAALLCGSLFSVAFLVI), 225–245 (IISIGFIFLTIGILSGAVWAN), 254–274 (WDPKETWAFITWTIFAIYFHI), and 286–306 (AIVASIGFLLIWICYFGVNLL).

It belongs to the CcmF/CycK/Ccl1/NrfE/CcsA family. In terms of assembly, may interact with Ccs1.

The protein localises to the plastid. The protein resides in the chloroplast thylakoid membrane. Its function is as follows. Required during biogenesis of c-type cytochromes (cytochrome c6 and cytochrome f) at the step of heme attachment. The sequence is that of Cytochrome c biogenesis protein CcsA from Manihot esculenta (Cassava).